We begin with the raw amino-acid sequence, 106 residues long: Large ribosomal subunit protein eL42 (106 aa).

This sequence belongs to the eukaryotic ribosomal protein eL42 family.

The polypeptide is Large ribosomal subunit protein eL42 (RPL44) (Debaryomyces hansenii (strain ATCC 36239 / CBS 767 / BCRC 21394 / JCM 1990 / NBRC 0083 / IGC 2968) (Yeast)).